A 252-amino-acid chain; its full sequence is Tabtoxin biosynthesis enzyme (252 aa).

Residues 1–23 (MYQRTATQLARKPASKQGETEMN) form a disordered region.

Functionally, may play a role in tabtoxin biosynthesis. This chain is Tabtoxin biosynthesis enzyme (tblA), found in Pseudomonas amygdali pv. tabaci (Pseudomonas syringae pv. tabaci).